A 464-amino-acid polypeptide reads, in one-letter code: tRNA modification GTPase MnmE (464 aa).

(6S)-5-formyl-5,6,7,8-tetrahydrofolate contacts are provided by Arg-27, Glu-90, and Lys-129. The TrmE-type G domain maps to 222–384 (GVTLVLAGSV…LYDKIKTLIS (163 aa)). Residues 232–237 (NAGKSS), 251–257 (SSYPGTT), and 276–279 (DTAG) each bind GTP. 2 residues coordinate Mg(2+): Ser-236 and Thr-257. Lys-464 provides a ligand contact to (6S)-5-formyl-5,6,7,8-tetrahydrofolate.

It belongs to the TRAFAC class TrmE-Era-EngA-EngB-Septin-like GTPase superfamily. TrmE GTPase family. As to quaternary structure, homodimer. Heterotetramer of two MnmE and two MnmG subunits. K(+) is required as a cofactor.

Its subcellular location is the cytoplasm. In terms of biological role, exhibits a very high intrinsic GTPase hydrolysis rate. Involved in the addition of a carboxymethylaminomethyl (cmnm) group at the wobble position (U34) of certain tRNAs, forming tRNA-cmnm(5)s(2)U34. The polypeptide is tRNA modification GTPase MnmE (Borrelia garinii subsp. bavariensis (strain ATCC BAA-2496 / DSM 23469 / PBi) (Borreliella bavariensis)).